Here is a 236-residue protein sequence, read N- to C-terminus: Large ribosomal subunit protein uL3 (236 aa).

It belongs to the universal ribosomal protein uL3 family. In terms of assembly, part of the 50S ribosomal subunit. Forms a cluster with proteins L14 and L19.

Its function is as follows. One of the primary rRNA binding proteins, it binds directly near the 3'-end of the 23S rRNA, where it nucleates assembly of the 50S subunit. The sequence is that of Large ribosomal subunit protein uL3 from Anaeromyxobacter dehalogenans (strain 2CP-1 / ATCC BAA-258).